The chain runs to 284 residues: Extracellular metalloprotease VDBG_01143 (284 aa).

The first 18 residues, 1 to 18 (MLFKSLFVAAATAVGVSG), serve as a signal peptide directing secretion. N-linked (GlcNAc...) asparagine glycosylation occurs at asparagine 58. Histidine 200 contributes to the Zn(2+) binding site. The active site involves glutamate 201. Histidine 204 serves as a coordination point for Zn(2+). A disulfide bridge connects residues cysteine 236 and cysteine 263.

Belongs to the peptidase M43B family.

The protein localises to the secreted. Its function is as follows. Secreted metalloproteinase that allows assimilation of proteinaceous substrates. This chain is Extracellular metalloprotease VDBG_01143, found in Verticillium alfalfae (strain VaMs.102 / ATCC MYA-4576 / FGSC 10136) (Verticillium wilt of alfalfa).